The primary structure comprises 390 residues: MPPSGLRLLPLLLPLPWLLVLTPGRPAAGLSTCKTIDMELVKRKRIEAIRGQILSKLRLASPPSQGEVPPGPLPEAVLALYNSTRDRVAGESADPEPEPEADYYAKEVTRVLMVDRNNAIYDKTKDITHSIYMFFNTSDIREAVPEPPLLSRAELRLQRFKSTVEQHVELYQKYSNNSWRYLGNRLLTPTDTPEWLSFDVTGVVRQWLNQGDGIQGFRFSAHCSCDSKDNVLHVEINGISPKRRGDLGTIHDMNRPFLLLMATPLERAQHLHSSRHRRALDTNYCFSSTEKNCCVRQLYIDFRKDLGWKWIHEPKGYHANFCLGPCPYIWSLDTQYSKVLALYNQHNPGASASPCCVPQALEPLPIVYYVGRKPKVEQLSNMIVRSCKCS.

The first 29 residues, 1–29, serve as a signal peptide directing secretion; the sequence is MPPSGLRLLPLLLPLPWLLVLTPGRPAAG. Residues 30–74 form a straightjacket domain region; sequence LSTCKTIDMELVKRKRIEAIRGQILSKLRLASPPSQGEVPPGPLP. The segment at 75-271 is arm domain; it reads EAVLALYNST…ATPLERAQHL (197 aa). N-linked (GlcNAc...) asparagine glycosylation is found at asparagine 82, asparagine 136, and asparagine 176. Positions 226 to 252 are bowtie tail; that stretch reads DSKDNVLHVEINGISPKRRGDLGTIHD. A Cell attachment site motif is present at residues 244–246; that stretch reads RGD. 4 disulfides stabilise this stretch: cysteine 285–cysteine 294, cysteine 293–cysteine 356, cysteine 322–cysteine 387, and cysteine 326–cysteine 389.

This sequence belongs to the TGF-beta family. In terms of assembly, homodimer; disulfide-linked. Interacts with the serine proteases, HTRA1 and HTRA3: the interaction with either inhibits TGFB1-mediated signaling and the HTRA protease activity is required for this inhibition. May interact with THSD4; this interaction may lead to sequestration by FBN1 microfibril assembly and attenuation of TGFB signaling. Interacts with CD109, DPT and ASPN. Interacts with EFEMP2. Interacts with TSKU; the interaction contributes to regulation of the hair cycle. Interacts with TGFBR3. Homodimer; disulfide-linked. Interacts with transforming growth factor beta-1 (TGF-beta-1) chain; interaction is non-covalent and maintains TGF-beta-1 in a latent state; each latency-associated peptide (LAP) monomer interacts with TGF-beta-1 in the other monomer. Interacts with LTBP1; leading to regulation of TGF-beta-1 activation. Interacts with LRRC32/GARP; leading to regulation of TGF-beta-1 activation on the surface of activated regulatory T-cells (Tregs). Interacts with LRRC33/NRROS; leading to regulation of TGF-beta-1 activation in macrophages and microglia. Interacts (via cell attachment site) with integrins ITGAV and ITGB6 (ITGAV:ITGB6), leading to release of the active TGF-beta-1. Interacts with NREP; the interaction results in a decrease in TGFB1 autoinduction. Interacts with HSP90AB1; inhibits latent TGFB1 activation. As to quaternary structure, homodimer; disulfide-linked. Interacts with TGF-beta receptors (TGFBR1 and TGFBR2), leading to signal transduction. Transforming growth factor beta-1 proprotein: The precursor proprotein is cleaved in the Golgi apparatus by FURIN to form Transforming growth factor beta-1 (TGF-beta-1) and Latency-associated peptide (LAP) chains, which remain non-covalently linked, rendering TGF-beta-1 inactive. In terms of processing, N-glycosylated. Deglycosylation leads to activation of Transforming growth factor beta-1 (TGF-beta-1); mechanisms triggering deglycosylation-driven activation of TGF-beta-1 are however unclear. As to expression, abundant in the bone matrix. Expressed in cardiomyocytes.

It localises to the secreted. The protein localises to the extracellular space. Its subcellular location is the extracellular matrix. Functionally, transforming growth factor beta-1 proprotein: Precursor of the Latency-associated peptide (LAP) and Transforming growth factor beta-1 (TGF-beta-1) chains, which constitute the regulatory and active subunit of TGF-beta-1, respectively. In terms of biological role, required to maintain the Transforming growth factor beta-1 (TGF-beta-1) chain in a latent state during storage in extracellular matrix. Associates non-covalently with TGF-beta-1 and regulates its activation via interaction with 'milieu molecules', such as LTBP1, LRRC32/GARP and LRRC33/NRROS, that control activation of TGF-beta-1. Interaction with LRRC33/NRROS regulates activation of TGF-beta-1 in macrophages and microglia. Interaction with LRRC32/GARP controls activation of TGF-beta-1 on the surface of activated regulatory T-cells (Tregs). Interaction with integrins (ITGAV:ITGB6 or ITGAV:ITGB8) results in distortion of the Latency-associated peptide chain and subsequent release of the active TGF-beta-1. Its function is as follows. Multifunctional protein that regulates the growth and differentiation of various cell types and is involved in various processes, such as normal development, immune function, microglia function and responses to neurodegeneration. Activation into mature form follows different steps: following cleavage of the proprotein in the Golgi apparatus, Latency-associated peptide (LAP) and Transforming growth factor beta-1 (TGF-beta-1) chains remain non-covalently linked rendering TGF-beta-1 inactive during storage in extracellular matrix. At the same time, LAP chain interacts with 'milieu molecules', such as LTBP1, LRRC32/GARP and LRRC33/NRROS that control activation of TGF-beta-1 and maintain it in a latent state during storage in extracellular milieus. TGF-beta-1 is released from LAP by integrins (ITGAV:ITGB6 or ITGAV:ITGB8): integrin-binding to LAP stabilizes an alternative conformation of the LAP bowtie tail and results in distortion of the LAP chain and subsequent release of the active TGF-beta-1. Once activated following release of LAP, TGF-beta-1 acts by binding to TGF-beta receptors (TGFBR1 and TGFBR2), which transduce signal. While expressed by many cells types, TGF-beta-1 only has a very localized range of action within cell environment thanks to fine regulation of its activation by Latency-associated peptide chain (LAP) and 'milieu molecules'. Plays an important role in bone remodeling: acts as a potent stimulator of osteoblastic bone formation, causing chemotaxis, proliferation and differentiation in committed osteoblasts. Can promote either T-helper 17 cells (Th17) or regulatory T-cells (Treg) lineage differentiation in a concentration-dependent manner. At high concentrations, leads to FOXP3-mediated suppression of RORC and down-regulation of IL-17 expression, favoring Treg cell development. At low concentrations in concert with IL-6 and IL-21, leads to expression of the IL-17 and IL-23 receptors, favoring differentiation to Th17 cells. Stimulates sustained production of collagen through the activation of CREB3L1 by regulated intramembrane proteolysis (RIP). Mediates SMAD2/3 activation by inducing its phosphorylation and subsequent translocation to the nucleus. Positively regulates odontoblastic differentiation in dental papilla cells, via promotion of IPO7-mediated translocation of phosphorylated SMAD2 to the nucleus and subsequent transcription of target genes. Can induce epithelial-to-mesenchymal transition (EMT) and cell migration in various cell types. The chain is Transforming growth factor beta-1 proprotein (Tgfb1) from Rattus norvegicus (Rat).